A 135-amino-acid chain; its full sequence is MILSDEKCDFLESIASFLSPKDVELVFVDSKEMQEINLEQRKQDKTTDVLSFPLENIDESLPLGSVVINVDLAKEKAKELGHSYEEEISLLFIHAMLHLLGFDHENDNGEMREKEKELIEHFNLPKSLIVRTLED.

Zn(2+) is bound by residues His-94, His-98, and His-104.

The protein belongs to the endoribonuclease YbeY family. Zn(2+) is required as a cofactor.

The protein localises to the cytoplasm. Functionally, single strand-specific metallo-endoribonuclease involved in late-stage 70S ribosome quality control and in maturation of the 3' terminus of the 16S rRNA. In Campylobacter jejuni subsp. jejuni serotype O:2 (strain ATCC 700819 / NCTC 11168), this protein is Endoribonuclease YbeY.